The following is a 558-amino-acid chain: Transcription termination factor MTEF18, mitochondrial (558 aa).

The transit peptide at 1–58 directs the protein to the mitochondrion; it reads MFMVRLKFASISHNFSTVAAKHRRVPSKYKSLAIGKAQQAITDYLHTTRSLSYTHAEQ.

The protein belongs to the mTERF family.

Its subcellular location is the mitochondrion. Transcription termination factor involved in the regulation of mitochondrial-encoded gene expression. Essential for normal plant growth and development. The polypeptide is Transcription termination factor MTEF18, mitochondrial (Arabidopsis thaliana (Mouse-ear cress)).